A 217-amino-acid polypeptide reads, in one-letter code: tRNA (guanine-N(7)-)-methyltransferase (217 aa).

Residues Glu45, Glu70, Asp97, and Asp119 each coordinate S-adenosyl-L-methionine. The active site involves Asp119. A substrate-binding site is contributed by Lys123. An interaction with RNA region spans residues 125-130 (RHEKRR). Substrate-binding positions include Asp155 and 195 to 198 (TEYE).

The protein belongs to the class I-like SAM-binding methyltransferase superfamily. TrmB family.

It carries out the reaction guanosine(46) in tRNA + S-adenosyl-L-methionine = N(7)-methylguanosine(46) in tRNA + S-adenosyl-L-homocysteine. It participates in tRNA modification; N(7)-methylguanine-tRNA biosynthesis. Catalyzes the formation of N(7)-methylguanine at position 46 (m7G46) in tRNA. This is tRNA (guanine-N(7)-)-methyltransferase from Lactobacillus helveticus (strain DPC 4571).